The chain runs to 139 residues: NADPH-dependent 7-cyano-7-deazaguanine reductase (139 aa).

Residue cysteine 34 is the Thioimide intermediate of the active site. Aspartate 41 serves as the catalytic Proton donor. Substrate-binding positions include 56 to 58 and 75 to 76; these read IEL and HE.

It belongs to the GTP cyclohydrolase I family. QueF type 1 subfamily.

It localises to the cytoplasm. It carries out the reaction 7-aminomethyl-7-carbaguanine + 2 NADP(+) = 7-cyano-7-deazaguanine + 2 NADPH + 3 H(+). It participates in tRNA modification; tRNA-queuosine biosynthesis. In terms of biological role, catalyzes the NADPH-dependent reduction of 7-cyano-7-deazaguanine (preQ0) to 7-aminomethyl-7-deazaguanine (preQ1). In Nitrosomonas eutropha (strain DSM 101675 / C91 / Nm57), this protein is NADPH-dependent 7-cyano-7-deazaguanine reductase.